A 359-amino-acid chain; its full sequence is DNA polymerase IV (359 aa).

Residues 7–188 (IIHIDMDAFY…LPIGKFFGVG (182 aa)) form the UmuC domain. Asp-11 and Asp-106 together coordinate Mg(2+). Glu-107 is an active-site residue.

This sequence belongs to the DNA polymerase type-Y family. Monomer. The cofactor is Mg(2+).

The protein resides in the cytoplasm. The catalysed reaction is DNA(n) + a 2'-deoxyribonucleoside 5'-triphosphate = DNA(n+1) + diphosphate. Functionally, poorly processive, error-prone DNA polymerase involved in untargeted mutagenesis. Copies undamaged DNA at stalled replication forks, which arise in vivo from mismatched or misaligned primer ends. These misaligned primers can be extended by PolIV. Exhibits no 3'-5' exonuclease (proofreading) activity. May be involved in translesional synthesis, in conjunction with the beta clamp from PolIII. This is DNA polymerase IV from Clostridium perfringens (strain 13 / Type A).